Consider the following 500-residue polypeptide: NAD(P)H-quinone oxidoreductase chain 4, chloroplastic (500 aa).

A run of 14 helical transmembrane segments spans residues 4 to 24 (FPWL…IFVF), 35 to 55 (YTIF…SYYF), 84 to 104 (GLSL…TLAA), 113 to 133 (LFHF…SSQN), 134 to 154 (LLLF…LLAM), 167 to 187 (FILY…GIAF), 211 to 231 (ILFY…IPLH), 242 to 262 (HYST…YGLV), 272 to 292 (AHSI…IYAA), 305 to 325 (IAYS…SISD), 330 to 350 (GAIL…FLSG), 386 to 406 (LALP…GIIT), 416 to 436 (ILIT…LLSM), and 463 to 483 (FVSI…DFVF).

The protein belongs to the complex I subunit 4 family.

Its subcellular location is the plastid. It localises to the chloroplast thylakoid membrane. It carries out the reaction a plastoquinone + NADH + (n+1) H(+)(in) = a plastoquinol + NAD(+) + n H(+)(out). It catalyses the reaction a plastoquinone + NADPH + (n+1) H(+)(in) = a plastoquinol + NADP(+) + n H(+)(out). In Populus trichocarpa (Western balsam poplar), this protein is NAD(P)H-quinone oxidoreductase chain 4, chloroplastic.